The primary structure comprises 188 residues: Elongation factor P (188 aa).

An N6-(3,6-diaminohexanoyl)-5-hydroxylysine modification is found at Lys-34.

This sequence belongs to the elongation factor P family. May be beta-lysylated on the epsilon-amino group of Lys-34 by the combined action of EpmA and EpmB, and then hydroxylated on the C5 position of the same residue by EpmC (if this protein is present). Lysylation is critical for the stimulatory effect of EF-P on peptide-bond formation. The lysylation moiety may extend toward the peptidyltransferase center and stabilize the terminal 3-CCA end of the tRNA. Hydroxylation of the C5 position on Lys-34 may allow additional potential stabilizing hydrogen-bond interactions with the P-tRNA.

The protein resides in the cytoplasm. Its pathway is protein biosynthesis; polypeptide chain elongation. Functionally, involved in peptide bond synthesis. Alleviates ribosome stalling that occurs when 3 or more consecutive Pro residues or the sequence PPG is present in a protein, possibly by augmenting the peptidyl transferase activity of the ribosome. Modification of Lys-34 is required for alleviation. The sequence is that of Elongation factor P from Citrobacter koseri (strain ATCC BAA-895 / CDC 4225-83 / SGSC4696).